Reading from the N-terminus, the 392-residue chain is Chaperone protein DnaJ (392 aa).

The 66-residue stretch at 2–67 folds into the J domain; the sequence is DYYDVLGVSK…QKRESYDRYG (66 aa). The CR-type zinc-finger motif lies at 149–227; it reads GVEKELLVSG…CRGQGRIKDK (79 aa). Residues cysteine 162, cysteine 165, cysteine 179, cysteine 182, cysteine 201, cysteine 204, cysteine 215, and cysteine 218 each coordinate Zn(2+). 4 CXXCXGXG motif repeats span residues 162 to 169, 179 to 186, 201 to 208, and 215 to 222; these read CETCLGSG, CDRCKGSG, CPECGGEG, and CSNCRGQG.

Belongs to the DnaJ family. Homodimer. Zn(2+) serves as cofactor.

The protein localises to the cytoplasm. Participates actively in the response to hyperosmotic and heat shock by preventing the aggregation of stress-denatured proteins and by disaggregating proteins, also in an autonomous, DnaK-independent fashion. Unfolded proteins bind initially to DnaJ; upon interaction with the DnaJ-bound protein, DnaK hydrolyzes its bound ATP, resulting in the formation of a stable complex. GrpE releases ADP from DnaK; ATP binding to DnaK triggers the release of the substrate protein, thus completing the reaction cycle. Several rounds of ATP-dependent interactions between DnaJ, DnaK and GrpE are required for fully efficient folding. Also involved, together with DnaK and GrpE, in the DNA replication of plasmids through activation of initiation proteins. The polypeptide is Chaperone protein DnaJ (Chlamydia caviae (strain ATCC VR-813 / DSM 19441 / 03DC25 / GPIC) (Chlamydophila caviae)).